A 220-amino-acid polypeptide reads, in one-letter code: Fructose-6-phosphate aldolase 1 (220 aa).

The active-site Schiff-base intermediate with substrate is the lysine 85.

The protein belongs to the transaldolase family. Type 3A subfamily. As to quaternary structure, homodecamer.

The protein localises to the cytoplasm. It catalyses the reaction beta-D-fructose 6-phosphate = dihydroxyacetone + D-glyceraldehyde 3-phosphate. Functionally, catalyzes the reversible formation of fructose 6-phosphate from dihydroxyacetone and D-glyceraldehyde 3-phosphate via an aldolization reaction. In Escherichia coli O6:H1 (strain CFT073 / ATCC 700928 / UPEC), this protein is Fructose-6-phosphate aldolase 1 (fsaA).